Here is a 75-residue protein sequence, read N- to C-terminus: Small ribosomal subunit protein bS18 (75 aa).

Belongs to the bacterial ribosomal protein bS18 family. In terms of assembly, part of the 30S ribosomal subunit. Forms a tight heterodimer with protein bS6.

Functionally, binds as a heterodimer with protein bS6 to the central domain of the 16S rRNA, where it helps stabilize the platform of the 30S subunit. In Methylobacillus flagellatus (strain ATCC 51484 / DSM 6875 / VKM B-1610 / KT), this protein is Small ribosomal subunit protein bS18.